Here is a 440-residue protein sequence, read N- to C-terminus: ATP-dependent protease ATPase subunit HslU (440 aa).

ATP-binding positions include I18 and 60-65 (GVGKTE). The segment at 138–159 (RAQSFDQEDPSAGTRQKLRKKL) is disordered. 3 residues coordinate ATP: D252, E318, and R390.

The protein belongs to the ClpX chaperone family. HslU subfamily. In terms of assembly, a double ring-shaped homohexamer of HslV is capped on each side by a ring-shaped HslU homohexamer. The assembly of the HslU/HslV complex is dependent on binding of ATP.

Its subcellular location is the cytoplasm. ATPase subunit of a proteasome-like degradation complex; this subunit has chaperone activity. The binding of ATP and its subsequent hydrolysis by HslU are essential for unfolding of protein substrates subsequently hydrolyzed by HslV. HslU recognizes the N-terminal part of its protein substrates and unfolds these before they are guided to HslV for hydrolysis. This Alkalilimnicola ehrlichii (strain ATCC BAA-1101 / DSM 17681 / MLHE-1) protein is ATP-dependent protease ATPase subunit HslU.